A 496-amino-acid chain; its full sequence is Angiopoietin-2 (496 aa).

An N-terminal signal peptide occupies residues 1-18; sequence MWQLVFLTLSCDLAVATA. N-linked (GlcNAc...) asparagine glycosylation is found at Asn90, Asn120, Asn134, Asn152, Asn241, and Asn304. A coiled-coil region spans residues 167–249; it reads STNKLEKQIL…VNNSVLQKQQ (83 aa). A Fibrinogen C-terminal domain is found at 275–495; that stretch reads KDEQIIFRDC…ATTMMIRPAD (221 aa). Residues Cys284 and Cys313 are joined by a disulfide bond. Residues Asp429, Asp431, Cys433, and Cys435 each coordinate Ca(2+). 2 disulfides stabilise this stretch: Cys433/Cys435 and Cys437/Cys450.

As to quaternary structure, interacts with TEK/TIE2, competing for the same binding site as ANGPT1. Interacts with ITGA5. Interacts with SVEP1/polydom. Interacts with THBD; this interaction significantly inhibits the generation of activated PC and TAFIa/CPB2 by the thrombin/thrombomodulin complex.

The protein localises to the secreted. Its function is as follows. Binds to TEK/TIE2, competing for the ANGPT1 binding site, and modulating ANGPT1 signaling. Can induce tyrosine phosphorylation of TEK/TIE2 in the absence of ANGPT1. In the absence of angiogenic inducers, such as VEGF, ANGPT2-mediated loosening of cell-matrix contacts may induce endothelial cell apoptosis with consequent vascular regression. In concert with VEGF, it may facilitate endothelial cell migration and proliferation, thus serving as a permissive angiogenic signal. Involved in the regulation of lymphangiogenesis. The sequence is that of Angiopoietin-2 (ANGPT2) from Bos taurus (Bovine).